A 143-amino-acid chain; its full sequence is Putative 2'-deoxynucleoside 5'-phosphate N-hydrolase 1 (143 aa).

Residues His-37, Glu-82, and 106-108 (SAM) each bind substrate.

This sequence belongs to the 2'-deoxynucleoside 5'-phosphate N-hydrolase 1 family. In terms of assembly, monomer and homodimer.

It carries out the reaction a pyrimidine 2'-deoxyribonucleoside 5'-phosphate + H2O = a pyrimidine nucleobase + 2-deoxy-D-ribose 5-phosphate. It catalyses the reaction a purine 2'-deoxyribonucleoside 5'-phosphate + H2O = a purine nucleobase + 2-deoxy-D-ribose 5-phosphate. Functionally, catalyzes the cleavage of the N-glycosidic bond of deoxyribonucleoside 5'-monophosphates to yield deoxyribose 5-phosphate and a purine or pyrimidine base. The chain is Putative 2'-deoxynucleoside 5'-phosphate N-hydrolase 1 from Thermofilum pendens (strain DSM 2475 / Hrk 5).